A 301-amino-acid polypeptide reads, in one-letter code: Heme A synthase (301 aa).

Residues 1 to 5 are Cytoplasmic-facing; the sequence is MHKKL. The helical transmembrane segment at 6-26 threads the bilayer; that stretch reads AFFSGFVTLGMMLVLIMGGTV. Residues 27–62 lie on the Extracellular side of the membrane; that stretch reads TKTDSGDGCGTDWPLCHGKLIPTNPSVETMIEYSHR. A disulfide bond links Cys35 and Cys42. Residue Glu58 is part of the active site. Residue His61 coordinates heme o. Residues 63–83 form a helical membrane-spanning segment; sequence VVSGIEGLLIIALAIWTFIAV. The Cytoplasmic segment spans residues 84–90; sequence KHRVDVK. The helical transmembrane segment at 91–111 threads the bilayer; that stretch reads IFAFLAFIFMLIQSIIGAGAV. The Extracellular segment spans residues 112–121; it reads IWQQSDAILA. Residues 122 to 142 traverse the membrane as a helical segment; sequence LHFGISLVSFASLLILTILLF. Residue His123 participates in heme o binding. The Cytoplasmic segment spans residues 143–158; that stretch reads EGDREHQVVSRRLRSH. A helical transmembrane segment spans residues 159 to 179; the sequence is LYGLSIYTMIVVYTGAYVRHL. Topologically, residues 180-203 are extracellular; it reads GATYACVGWPICEQEVWTFESYVQ. An intrachain disulfide couples Cys185 to Cys191. Residues 204 to 224 form a helical membrane-spanning segment; the sequence is MGHRVMAGLLVLYTLYVLYLA. His206 contacts heme b. Residues 225 to 234 lie on the Cytoplasmic side of the membrane; sequence RKEMNRLIER. Residues 235-255 form a helical membrane-spanning segment; the sequence is GMMASLFFILLQVGTGAWIVL. Topologically, residues 256–259 are extracellular; that stretch reads GGHA. The helical transmembrane segment at 260–280 threads the bilayer; that stretch reads TYVPLLHAFLITCYFGILSYL. His266 provides a ligand contact to heme b. Residues 281–301 are Cytoplasmic-facing; sequence SYHAYRSTARQDGAQLKNMNG.

It belongs to the COX15/CtaA family. Type 1 subfamily. Interacts with CtaB. Heme b is required as a cofactor.

The protein localises to the cell membrane. It carries out the reaction Fe(II)-heme o + 2 A + H2O = Fe(II)-heme a + 2 AH2. Its pathway is porphyrin-containing compound metabolism; heme A biosynthesis; heme A from heme O: step 1/1. Functionally, catalyzes the conversion of heme O to heme A by two successive hydroxylations of the methyl group at C8. The first hydroxylation forms heme I, the second hydroxylation results in an unstable dihydroxymethyl group, which spontaneously dehydrates, resulting in the formyl group of heme A. This is Heme A synthase from Exiguobacterium sp. (strain ATCC BAA-1283 / AT1b).